The sequence spans 121 residues: Putative RNase MJ1216 (121 aa).

Active-site residues include R76 and H81. The short motif at 76-83 (RDKLIHQY) is the RX(4)HXY motif element. Y83 is subject to O-di-AMP-tyrosine.

It belongs to the HepT RNase toxin family. As to quaternary structure, homodimer, probably forms a complex with antitoxin MJ1215 or MJ1217. Modified by antitoxin MJ1215 or MJ1217; probably at least 2 successive AMPylation events occur on Tyr-83.

In terms of biological role, probable toxic component of a putative type VII toxin-antitoxin (TA) system, probably an RNase. Probably neutralized by antitoxin MJ1215 or MJ1217. Neutralization may be due to AMPylation by antitoxin. The polypeptide is Putative RNase MJ1216 (Methanocaldococcus jannaschii (strain ATCC 43067 / DSM 2661 / JAL-1 / JCM 10045 / NBRC 100440) (Methanococcus jannaschii)).